The chain runs to 593 residues: Zinc metalloproteinase-disintegrin-like atrase-B (593 aa).

The N-terminal stretch at 1–20 is a signal peptide; that stretch reads MIQALLVIICLAVFPHQGSS. Positions 21–191 are excised as a propeptide; sequence IILESGNVND…DESIEKTSQL (171 aa). The Peptidase M12B domain occupies 205-400; the sequence is KYIEFYVIVD…DRPQCILNKP (196 aa). Residues E208 and D292 each coordinate Ca(2+). 3 cysteine pairs are disulfide-bonded: C316–C395, C356–C379, and C358–C363. The N-linked (GlcNAc...) asparagine glycan is linked to N319. Residue H341 coordinates Zn(2+). E342 is a catalytic residue. The Zn(2+) site is built by H345 and H351. Positions 395, 398, 410, 413, 415, 417, 420, and 423 each coordinate Ca(2+). Positions 408–477 constitute a Disintegrin domain; sequence PPICGNYFVE…ECPTDSLQRN (70 aa). 11 disulfides stabilise this stretch: C422–C435, C424–C430, C434–C440, C449–C469, C456–C488, C481–C493, C500–C550, C515–C558, C528–C538, C545–C581, and C575–C586. A D/ECD-tripeptide motif is present at residues 455 to 457; sequence DCD. Residues D457, L458, E460, and D472 each coordinate Ca(2+). N490 carries an N-linked (GlcNAc...) asparagine glycan.

This sequence belongs to the venom metalloproteinase (M12B) family. P-III subfamily. P-IIIa sub-subfamily. As to quaternary structure, monomer. Zn(2+) serves as cofactor. Expressed by the venom gland.

The protein localises to the secreted. Its activity is regulated as follows. Inhibited by EDTA, EGTA, 1,10-phenanthroline and DTT. Not inhibited by PMSF and SBTI. In terms of biological role, snake venom zinc protease that inhibits the classical and alternative pathways of complement by cleaving factor B, C6, C7, and C8. Also slowly and selectively degrades alpha-chain of fibrinogen (FGA), and shows edema-inducing activity. The chain is Zinc metalloproteinase-disintegrin-like atrase-B from Naja atra (Chinese cobra).